The chain runs to 366 residues: Carbamoyl phosphate synthase small chain (366 aa).

The CPSase stretch occupies residues 1-168 (MYGILVLEDG…KETVVYSADD (168 aa)). 3 residues coordinate L-glutamine: Ser45, Gly220, and Gly222. The region spanning 172–363 (KCVLIDCGVK…VELGIKFKAE (192 aa)) is the Glutamine amidotransferase type-1 domain. Cys247 (nucleophile) is an active-site residue. Leu248, Gln251, Asn289, Gly291, and Phe292 together coordinate L-glutamine. Active-site residues include His336 and Glu338.

It belongs to the CarA family. As to quaternary structure, composed of two chains; the small (or glutamine) chain promotes the hydrolysis of glutamine to ammonia, which is used by the large (or ammonia) chain to synthesize carbamoyl phosphate. Tetramer of heterodimers (alpha,beta)4.

The catalysed reaction is hydrogencarbonate + L-glutamine + 2 ATP + H2O = carbamoyl phosphate + L-glutamate + 2 ADP + phosphate + 2 H(+). The enzyme catalyses L-glutamine + H2O = L-glutamate + NH4(+). It participates in amino-acid biosynthesis; L-arginine biosynthesis; carbamoyl phosphate from bicarbonate: step 1/1. Its pathway is pyrimidine metabolism; UMP biosynthesis via de novo pathway; (S)-dihydroorotate from bicarbonate: step 1/3. In terms of biological role, small subunit of the glutamine-dependent carbamoyl phosphate synthetase (CPSase). CPSase catalyzes the formation of carbamoyl phosphate from the ammonia moiety of glutamine, carbonate, and phosphate donated by ATP, constituting the first step of 2 biosynthetic pathways, one leading to arginine and/or urea and the other to pyrimidine nucleotides. The small subunit (glutamine amidotransferase) binds and cleaves glutamine to supply the large subunit with the substrate ammonia. This is Carbamoyl phosphate synthase small chain from Methanococcus maripaludis (strain C6 / ATCC BAA-1332).